A 464-amino-acid chain; its full sequence is 3-isopropylmalate dehydratase large subunit (464 aa).

Residues C337, C397, and C400 each coordinate [4Fe-4S] cluster.

Belongs to the aconitase/IPM isomerase family. LeuC type 1 subfamily. In terms of assembly, heterodimer of LeuC and LeuD. It depends on [4Fe-4S] cluster as a cofactor.

The enzyme catalyses (2R,3S)-3-isopropylmalate = (2S)-2-isopropylmalate. It participates in amino-acid biosynthesis; L-leucine biosynthesis; L-leucine from 3-methyl-2-oxobutanoate: step 2/4. Its function is as follows. Catalyzes the isomerization between 2-isopropylmalate and 3-isopropylmalate, via the formation of 2-isopropylmaleate. This Bacillus cereus (strain G9842) protein is 3-isopropylmalate dehydratase large subunit.